The chain runs to 376 residues: Queuine tRNA-ribosyltransferase (376 aa).

Asp-92 (proton acceptor) is an active-site residue. Substrate contacts are provided by residues 92-96 (DSGGF), Asp-146, Gln-190, and Gly-217. Residues 248-254 (GVGRPED) are RNA binding. Asp-267 serves as the catalytic Nucleophile. The tract at residues 272–276 (TRNAR) is RNA binding; important for wobble base 34 recognition. Cys-305, Cys-307, Cys-310, and His-337 together coordinate Zn(2+).

It belongs to the queuine tRNA-ribosyltransferase family. Homodimer. Within each dimer, one monomer is responsible for RNA recognition and catalysis, while the other monomer binds to the replacement base PreQ1. Zn(2+) serves as cofactor.

The catalysed reaction is 7-aminomethyl-7-carbaguanine + guanosine(34) in tRNA = 7-aminomethyl-7-carbaguanosine(34) in tRNA + guanine. Its pathway is tRNA modification; tRNA-queuosine biosynthesis. In terms of biological role, catalyzes the base-exchange of a guanine (G) residue with the queuine precursor 7-aminomethyl-7-deazaguanine (PreQ1) at position 34 (anticodon wobble position) in tRNAs with GU(N) anticodons (tRNA-Asp, -Asn, -His and -Tyr). Catalysis occurs through a double-displacement mechanism. The nucleophile active site attacks the C1' of nucleotide 34 to detach the guanine base from the RNA, forming a covalent enzyme-RNA intermediate. The proton acceptor active site deprotonates the incoming PreQ1, allowing a nucleophilic attack on the C1' of the ribose to form the product. After dissociation, two additional enzymatic reactions on the tRNA convert PreQ1 to queuine (Q), resulting in the hypermodified nucleoside queuosine (7-(((4,5-cis-dihydroxy-2-cyclopenten-1-yl)amino)methyl)-7-deazaguanosine). This Stenotrophomonas maltophilia (strain K279a) protein is Queuine tRNA-ribosyltransferase.